Consider the following 342-residue polypeptide: Aspartate carbamoyltransferase catalytic subunit (342 aa).

Residues R54 and T55 each coordinate carbamoyl phosphate. K82 is an L-aspartate binding site. Residues R104, H134, and Q137 each coordinate carbamoyl phosphate. R177 and R232 together coordinate L-aspartate. Carbamoyl phosphate is bound by residues G277 and P278.

This sequence belongs to the aspartate/ornithine carbamoyltransferase superfamily. ATCase family. As to quaternary structure, heterododecamer (2C3:3R2) of six catalytic PyrB chains organized as two trimers (C3), and six regulatory PyrI chains organized as three dimers (R2).

The enzyme catalyses carbamoyl phosphate + L-aspartate = N-carbamoyl-L-aspartate + phosphate + H(+). It participates in pyrimidine metabolism; UMP biosynthesis via de novo pathway; (S)-dihydroorotate from bicarbonate: step 2/3. Catalyzes the condensation of carbamoyl phosphate and aspartate to form carbamoyl aspartate and inorganic phosphate, the committed step in the de novo pyrimidine nucleotide biosynthesis pathway. This Pseudarthrobacter chlorophenolicus (strain ATCC 700700 / DSM 12829 / CIP 107037 / JCM 12360 / KCTC 9906 / NCIMB 13794 / A6) (Arthrobacter chlorophenolicus) protein is Aspartate carbamoyltransferase catalytic subunit.